The chain runs to 368 residues: Leu/Ile/Val-binding protein homolog 3 (368 aa).

A signal peptide spans 1–23 (MNLKLLSSVAFAATIGFASAAYA).

This sequence belongs to the leucine-binding protein family.

Component of an amino-acid transport system. The protein is Leu/Ile/Val-binding protein homolog 3 of Brucella melitensis biotype 1 (strain ATCC 23456 / CCUG 17765 / NCTC 10094 / 16M).